Consider the following 181-residue polypeptide: uncharacterized protein (181 aa).

2 stretches are compositionally biased toward gly residues: residues Arg-143–Gly-156 and Gly-170–Phe-181. Residues Arg-143–Phe-181 are disordered.

In terms of assembly, has been detected in a cytochrome bc1-aa3 supercomplex; its deletion however leaves complex activity unaffected.

This is an uncharacterized protein from Corynebacterium glutamicum (strain ATCC 13032 / DSM 20300 / JCM 1318 / BCRC 11384 / CCUG 27702 / LMG 3730 / NBRC 12168 / NCIMB 10025 / NRRL B-2784 / 534).